We begin with the raw amino-acid sequence, 359 residues long: Photosystem II protein D1 1 (359 aa).

3 helical membrane-spanning segments follow: residues 29–46 (YVGW…AATT), 118–133 (HFLI…EWEL), and 142–156 (WICI…AASA). Histidine 118 is a chlorophyll a binding site. Tyrosine 126 serves as a coordination point for pheophytin a. Residues aspartate 170 and glutamate 189 each contribute to the [CaMn4O5] cluster site. A helical membrane pass occupies residues 197–218 (FHMLGVAGVFGGSLFSAMHGSL). Histidine 198 is a chlorophyll a binding site. Residues histidine 215 and 264-265 (SF) contribute to the a quinone site. Histidine 215 serves as a coordination point for Fe cation. Histidine 272 contacts Fe cation. Residues 274–288 (FLAAWPVVGIWFTAL) traverse the membrane as a helical segment. [CaMn4O5] cluster contacts are provided by histidine 332, glutamate 333, aspartate 342, and alanine 344. Positions 345-359 (AAESAPVALQAPAIG) are excised as a propeptide.

Belongs to the reaction center PufL/M/PsbA/D family. As to quaternary structure, PSII is composed of 1 copy each of membrane proteins PsbA, PsbB, PsbC, PsbD, PsbE, PsbF, PsbH, PsbI, PsbJ, PsbK, PsbL, PsbM, PsbT, PsbX, PsbY, PsbZ, Psb30/Ycf12, peripheral proteins PsbO, CyanoQ (PsbQ), PsbU, PsbV and a large number of cofactors. It forms dimeric complexes. The D1/D2 heterodimer binds P680, chlorophylls that are the primary electron donor of PSII, and subsequent electron acceptors. It shares a non-heme iron and each subunit binds pheophytin, quinone, additional chlorophylls, carotenoids and lipids. D1 provides most of the ligands for the Mn4-Ca-O5 cluster of the oxygen-evolving complex (OEC). There is also a Cl(-1) ion associated with D1 and D2, which is required for oxygen evolution. The PSII complex binds additional chlorophylls, carotenoids and specific lipids. serves as cofactor. In terms of processing, tyr-161 forms a radical intermediate that is referred to as redox-active TyrZ, YZ or Y-Z. Post-translationally, C-terminally processed by CtpA; processing is essential to allow assembly of the oxygen-evolving complex and thus photosynthetic growth.

The protein resides in the cellular thylakoid membrane. It catalyses the reaction 2 a plastoquinone + 4 hnu + 2 H2O = 2 a plastoquinol + O2. Functionally, photosystem II (PSII) is a light-driven water:plastoquinone oxidoreductase that uses light energy to abstract electrons from H(2)O, generating O(2) and a proton gradient subsequently used for ATP formation. It consists of a core antenna complex that captures photons, and an electron transfer chain that converts photonic excitation into a charge separation. The D1/D2 (PsbA/PsbD) reaction center heterodimer binds P680, the primary electron donor of PSII as well as several subsequent electron acceptors. In Synechococcus sp. (strain RCC307), this protein is Photosystem II protein D1 1.